Reading from the N-terminus, the 459-residue chain is Argininosuccinate lyase (459 aa).

Belongs to the lyase 1 family. Argininosuccinate lyase subfamily.

Its subcellular location is the cytoplasm. The catalysed reaction is 2-(N(omega)-L-arginino)succinate = fumarate + L-arginine. It participates in amino-acid biosynthesis; L-arginine biosynthesis; L-arginine from L-ornithine and carbamoyl phosphate: step 3/3. The polypeptide is Argininosuccinate lyase (Buchnera aphidicola subsp. Schizaphis graminum (strain Sg)).